The sequence spans 328 residues: Malate dehydrogenase (328 aa).

12-18 contacts NAD(+); that stretch reads GAAGQIG. The substrate site is built by R93 and R99. NAD(+) contacts are provided by residues N106, Q113, and 130–132; that span reads VGN. Substrate contacts are provided by N132 and R166. H191 acts as the Proton acceptor in catalysis.

This sequence belongs to the LDH/MDH superfamily. MDH type 2 family.

It catalyses the reaction (S)-malate + NAD(+) = oxaloacetate + NADH + H(+). In terms of biological role, catalyzes the reversible oxidation of malate to oxaloacetate. The polypeptide is Malate dehydrogenase (Dechloromonas aromatica (strain RCB)).